The following is a 508-amino-acid chain: Photosystem II CP47 reaction center protein (508 aa).

A run of 6 helical transmembrane segments spans residues 21-36 (SVHI…WAGS), 101-115 (IVFS…IWHW), 140-156 (GIHL…FGAF), 203-218 (IAAG…FHLS), 237-252 (VLSS…AFVV), and 457-472 (SFAL…HGAR).

Belongs to the PsbB/PsbC family. PsbB subfamily. As to quaternary structure, PSII is composed of 1 copy each of membrane proteins PsbA, PsbB, PsbC, PsbD, PsbE, PsbF, PsbH, PsbI, PsbJ, PsbK, PsbL, PsbM, PsbT, PsbX, PsbY, PsbZ, Psb30/Ycf12, at least 3 peripheral proteins of the oxygen-evolving complex and a large number of cofactors. It forms dimeric complexes. Binds multiple chlorophylls. PSII binds additional chlorophylls, carotenoids and specific lipids. is required as a cofactor.

It is found in the plastid. It localises to the chloroplast thylakoid membrane. Its function is as follows. One of the components of the core complex of photosystem II (PSII). It binds chlorophyll and helps catalyze the primary light-induced photochemical processes of PSII. PSII is a light-driven water:plastoquinone oxidoreductase, using light energy to abstract electrons from H(2)O, generating O(2) and a proton gradient subsequently used for ATP formation. The protein is Photosystem II CP47 reaction center protein of Atropa belladonna (Belladonna).